Consider the following 425-residue polypeptide: Serine--tRNA ligase (425 aa).

228–230 contributes to the L-serine binding site; that stretch reads TAE. Residue 259–261 coordinates ATP; that stretch reads RSE. Glu-282 contacts L-serine. Position 346-349 (346-349) interacts with ATP; sequence EIAS. Residue Ser-382 participates in L-serine binding.

It belongs to the class-II aminoacyl-tRNA synthetase family. Type-1 seryl-tRNA synthetase subfamily. In terms of assembly, homodimer. The tRNA molecule binds across the dimer.

The protein resides in the cytoplasm. The catalysed reaction is tRNA(Ser) + L-serine + ATP = L-seryl-tRNA(Ser) + AMP + diphosphate + H(+). It catalyses the reaction tRNA(Sec) + L-serine + ATP = L-seryl-tRNA(Sec) + AMP + diphosphate + H(+). It functions in the pathway aminoacyl-tRNA biosynthesis; selenocysteinyl-tRNA(Sec) biosynthesis; L-seryl-tRNA(Sec) from L-serine and tRNA(Sec): step 1/1. In terms of biological role, catalyzes the attachment of serine to tRNA(Ser). Is also able to aminoacylate tRNA(Sec) with serine, to form the misacylated tRNA L-seryl-tRNA(Sec), which will be further converted into selenocysteinyl-tRNA(Sec). This Rickettsia africae (strain ESF-5) protein is Serine--tRNA ligase.